Reading from the N-terminus, the 545-residue chain is T-complex protein 1 subunit gamma (545 aa).

Position 1 is an N-acetylmethionine (methionine 1). Residues 1–24 (MMGHRPVLVLSQNTKRESGRKVQS) are disordered. Serine 11 carries the post-translational modification Phosphoserine. Residue lysine 15 forms a Glycyl lysine isopeptide (Lys-Gly) (interchain with G-Cter in SUMO2) linkage. ADP is bound at residue glycine 42. Glycine 42 serves as a coordination point for ATP. Aspartate 93 contacts Mg(2+). Positions 94, 95, 96, 97, 162, and 163 each coordinate ADP. 3 residues coordinate ATP: glycine 94, threonine 95, and threonine 96. The residue at position 170 (serine 170) is a Phosphoserine. At lysine 222 the chain carries N6-acetyllysine. Serine 243 and serine 244 each carry phosphoserine. Residue tyrosine 247 is modified to Phosphotyrosine. Glycyl lysine isopeptide (Lys-Gly) (interchain with G-Cter in SUMO2) cross-links involve residues lysine 248 and lysine 249. Serine 252 carries the post-translational modification Phosphoserine. A disulfide bond links cysteine 366 and cysteine 372. Lysine 381 is covalently cross-linked (Glycyl lysine isopeptide (Lys-Gly) (interchain with G-Cter in SUMO2)). Glycine 411 provides a ligand contact to ADP. Glycine 411 contributes to the ATP binding site. Residues threonine 430 and threonine 459 each carry the phosphothreonine modification. Positions 482, 483, 497, and 502 each coordinate ADP. Residue glycine 482 participates in ATP binding. Position 497 (glutamate 497) interacts with ATP. The interval 526 to 545 (HKKKGDDQNRQTGAPDAGQE) is disordered.

This sequence belongs to the TCP-1 chaperonin family. Component of the chaperonin-containing T-complex (TRiC), a hexadecamer composed of two identical back-to-back stacked rings enclosing a protein folding chamber. Each ring is made up of eight different subunits: TCP1/CCT1, CCT2, CCT3, CCT4, CCT5, CCT6A/CCT6, CCT7, CCT8. Interacts with PACRG. Interacts with DNAAF4. Interacts with DLEC1.

The protein localises to the cytoplasm. It catalyses the reaction ATP + H2O = ADP + phosphate + H(+). Functionally, component of the chaperonin-containing T-complex (TRiC), a molecular chaperone complex that assists the folding of actin, tubulin and other proteins upon ATP hydrolysis. The TRiC complex mediates the folding of WRAP53/TCAB1, thereby regulating telomere maintenance. As part of the TRiC complex may play a role in the assembly of BBSome, a complex involved in ciliogenesis regulating transports vesicles to the cilia. This chain is T-complex protein 1 subunit gamma (Cct3), found in Rattus norvegicus (Rat).